The following is a 137-amino-acid chain: Nucleoside diphosphate kinase (137 aa).

ATP contacts are provided by K9, F57, R85, T91, R102, and N112. H115 functions as the Pros-phosphohistidine intermediate in the catalytic mechanism.

The protein belongs to the NDK family. In terms of assembly, homotetramer. Requires Mg(2+) as cofactor.

It localises to the cytoplasm. It carries out the reaction a 2'-deoxyribonucleoside 5'-diphosphate + ATP = a 2'-deoxyribonucleoside 5'-triphosphate + ADP. The catalysed reaction is a ribonucleoside 5'-diphosphate + ATP = a ribonucleoside 5'-triphosphate + ADP. Its function is as follows. Major role in the synthesis of nucleoside triphosphates other than ATP. The ATP gamma phosphate is transferred to the NDP beta phosphate via a ping-pong mechanism, using a phosphorylated active-site intermediate. This Leptospira borgpetersenii serovar Hardjo-bovis (strain L550) protein is Nucleoside diphosphate kinase.